The following is a 467-amino-acid chain: DEAD-box ATP-dependent RNA helicase CshA (467 aa).

The Q motif signature appears at 2-30 (TTFQELGLSQEVMKAIERMGFEETTPIQA). The Helicase ATP-binding domain occupies 33-203 (IPLSLQNKDV…ERFMNEPELV (171 aa)). 46-53 (AQTGTGKT) contributes to the ATP binding site. The short motif at 151 to 154 (DEAD) is the DEAD box element. The 161-residue stretch at 214 to 374 (NIQQYYLEVH…RMKPPTLDEA (161 aa)) folds into the Helicase C-terminal domain. Positions 428–467 (TTPVQLTEEPPLAVKREKKRGGRPDGSARSRTKKRRITAH) are disordered. The segment covering 457-467 (SRTKKRRITAH) has biased composition (basic residues).

This sequence belongs to the DEAD box helicase family. CshA subfamily. Oligomerizes, may be a member of the RNA degradosome.

Its subcellular location is the cytoplasm. It catalyses the reaction ATP + H2O = ADP + phosphate + H(+). Its function is as follows. DEAD-box RNA helicase possibly involved in RNA degradation. Unwinds dsRNA in both 5'- and 3'-directions, has RNA-dependent ATPase activity. This chain is DEAD-box ATP-dependent RNA helicase CshA, found in Geobacillus kaustophilus (strain HTA426).